The sequence spans 322 residues: Succinate/fumarate mitochondrial transporter (322 aa).

3 Solcar repeats span residues 8 to 99 (SHPA…YRTL), 111 to 202 (GNTF…LKEF), and 212 to 303 (LPSW…VREH). 6 consecutive transmembrane segments (helical) span residues 11–31 (AINL…CHPL), 68–88 (FLAL…KMAI), 114–134 (FVAG…PMEV), 177–193 (GVSL…GANF), 219–235 (CIGL…NAPL), and 278–295 (GITP…VTFT).

This sequence belongs to the mitochondrial carrier (TC 2.A.29) family.

It is found in the mitochondrion inner membrane. Its function is as follows. Transports cytoplasmic succinate, derived from isocitrate by the action of isocitrate lyase in the cytosol, into the mitochondrial matrix in exchange for fumarate. The sequence is that of Succinate/fumarate mitochondrial transporter (SFC1) from Saccharomyces cerevisiae (strain ATCC 204508 / S288c) (Baker's yeast).